The sequence spans 263 residues: N-acyl homoserine lactonase AttM (263 aa).

Residues His-103, His-105, Asp-107, His-108, His-180, Asp-202, and His-247 each coordinate Zn(2+).

It belongs to the metallo-beta-lactamase superfamily. Zn(2+) is required as a cofactor.

It carries out the reaction an N-acyl-L-homoserine lactone + H2O = an N-acyl-L-homoserine + H(+). This is N-acyl homoserine lactonase AttM from Rhizobium johnstonii (strain DSM 114642 / LMG 32736 / 3841) (Rhizobium leguminosarum bv. viciae).